Reading from the N-terminus, the 303-residue chain is uncharacterized protein (303 aa).

An N-terminal signal peptide occupies residues 1–24; the sequence is MNRIALVFLYSLFLFNLAIGRVES. A glycan (N-linked (GlcNAc...) asparagine) is linked at asparagine 116. Positions 124–179 are disordered; that stretch reads FTRQQQKKSHDDDDDDDDSDSDESKEEEEKKKRDRKHRRDKRQAITQGSQNNTDPN. Over residues 135–149 the composition is skewed to acidic residues; it reads DDDDDDDSDSDESKE. Positions 155 to 164 are enriched in basic residues; sequence KRDRKHRRDK. The segment covering 167–178 has biased composition (polar residues); the sequence is AITQGSQNNTDP.

This is an uncharacterized protein from Caenorhabditis elegans.